A 402-amino-acid polypeptide reads, in one-letter code: Adenylyltransferase and sulfurtransferase MOCS3 (402 aa).

Residues Gly47, Asp68, 75–79, Lys92, and 136–137 contribute to the ATP site; these read DNLHR and DN. Cys178 and Cys181 together coordinate Zn(2+). The active-site Glycyl thioester intermediate; for adenylyltransferase activity is the Cys195. Zn(2+) is bound by residues Cys253 and Cys256. The Rhodanese domain maps to 303–400; that stretch reads AARKQFLLDT…WALKINDEFP (98 aa). The active-site Cysteine persulfide intermediate; for sulfurtransferase activity is the Cys359.

It in the N-terminal section; belongs to the HesA/MoeB/ThiF family. UBA4 subfamily. The cofactor is Zn(2+).

Its subcellular location is the cytoplasm. The protein localises to the cytosol. It carries out the reaction [molybdopterin-synthase sulfur-carrier protein]-C-terminal Gly-Gly + ATP + H(+) = [molybdopterin-synthase sulfur-carrier protein]-C-terminal Gly-Gly-AMP + diphosphate. It catalyses the reaction [molybdopterin-synthase sulfur-carrier protein]-C-terminal Gly-Gly-AMP + S-sulfanyl-L-cysteinyl-[cysteine desulfurase] + AH2 = [molybdopterin-synthase sulfur-carrier protein]-C-terminal-Gly-aminoethanethioate + L-cysteinyl-[cysteine desulfurase] + A + AMP + 2 H(+). The protein operates within tRNA modification; 5-methoxycarbonylmethyl-2-thiouridine-tRNA biosynthesis. It participates in cofactor biosynthesis; molybdopterin biosynthesis. Its function is as follows. Plays a central role in 2-thiolation of mcm(5)S(2)U at tRNA wobble positions of cytosolic tRNA(Lys), tRNA(Glu) and tRNA(Gln). Also essential during biosynthesis of the molybdenum cofactor. Acts by mediating the C-terminal thiocarboxylation of sulfur carriers URM1 and MOCS2A. Its N-terminus first activates URM1 and MOCS2A as acyl-adenylates (-COAMP), then the persulfide sulfur on the catalytic cysteine is transferred to URM1 and MOCS2A to form thiocarboxylation (-COSH) of their C-terminus. The reaction probably involves hydrogen sulfide that is generated from the persulfide intermediate and that acts as a nucleophile towards URM1 and MOCS2A. Subsequently, a transient disulfide bond is formed. Does not use thiosulfate as sulfur donor; NFS1 probably acting as a sulfur donor for thiocarboxylation reactions. The sequence is that of Adenylyltransferase and sulfurtransferase MOCS3 from Caenorhabditis briggsae.